Consider the following 329-residue polypeptide: Protein SPATA31F3 (329 aa).

The helical transmembrane segment at 11–31 (VGYSVYTYGSIFIIALIIWQV) threads the bilayer. Positions 58–85 (SDRATRAKRTSKEEAEKLQKLLDTMKSQ) form a coiled coil. Disordered regions lie at residues 149-184 (ADRSSELTYQDTRDVSLSSRFPQSQETDQQSTRSAT), 201-250 (QQLD…AAPT), and 288-329 (KPMT…KRNI). S152 and S153 each carry phosphoserine. Polar residues-rich tracts occupy residues 154 to 184 (ELTYQDTRDVSLSSRFPQSQETDQQSTRSAT) and 201 to 223 (QQLDPQGSKMTQDAKGLSSSSTD). A compositionally biased stretch (basic residues) spans 232–242 (QKKRKKTKKLA). Basic and acidic residues predominate over residues 293–320 (EPEKTHSPVRDQAEGAEKKKKPECDLKA).

This sequence belongs to the SPATA31 family.

It localises to the membrane. This chain is Protein SPATA31F3, found in Rattus norvegicus (Rat).